Consider the following 798-residue polypeptide: Integrin beta-1 (798 aa).

The N-terminal stretch at 1-20 (MNLQLIFWIGLISSICCVFG) is a signal peptide. At 21–728 (QADENRCLKA…ETPECPTGPD (708 aa)) the chain is on the extracellular side. The 51-residue stretch at 26-76 (RCLKANAKSCGECIQAGPNCGWCVNSTFLQEGMPTSARCDDLEALKKKGCH) folds into the PSI domain. Intrachain disulfides connect cysteine 27-cysteine 45, cysteine 35-cysteine 464, cysteine 38-cysteine 64, cysteine 48-cysteine 75, cysteine 207-cysteine 213, cysteine 261-cysteine 301, cysteine 401-cysteine 415, cysteine 435-cysteine 462, cysteine 466-cysteine 486, cysteine 477-cysteine 489, cysteine 491-cysteine 500, cysteine 502-cysteine 533, cysteine 516-cysteine 531, cysteine 525-cysteine 536, cysteine 538-cysteine 553, cysteine 555-cysteine 576, cysteine 560-cysteine 574, cysteine 568-cysteine 579, cysteine 581-cysteine 590, cysteine 592-cysteine 615, cysteine 599-cysteine 613, cysteine 607-cysteine 618, cysteine 620-cysteine 630, cysteine 633-cysteine 636, cysteine 640-cysteine 691, cysteine 646-cysteine 665, cysteine 649-cysteine 661, and cysteine 699-cysteine 723. N-linked (GlcNAc...) asparagine glycosylation occurs at asparagine 50. The segment covering 75-91 (CHPDDIENPRGSKDVKK) has biased composition (basic and acidic residues). Residues 75 to 107 (CHPDDIENPRGSKDVKKNKNVTNRSKGTAEKLQ) are disordered. Residues asparagine 94 and asparagine 97 are each glycosylated (N-linked (GlcNAc...) asparagine). Positions 140 to 378 (DYPIDLYYLM…QLIIDAYNSL (239 aa)) constitute a VWFA domain. Mg(2+) is bound by residues serine 152 and serine 154. 4 residues coordinate Ca(2+): serine 154, aspartate 157, aspartate 158, and glutamate 189. A CX3CL1-binding region spans residues 207 to 213 (CTSEQNC). A glycan (N-linked (GlcNAc...) asparagine) is linked at asparagine 212. The Ca(2+) site is built by asparagine 244, aspartate 246, proline 248, and glutamate 249. Mg(2+) is bound at residue glutamate 249. Asparagine 269 is a glycosylation site (N-linked (GlcNAc...) asparagine). The tract at residues 295 to 314 (LPNDGQCHLENDVYTMSHYY) is CX3CL1-binding. Residue alanine 362 participates in Ca(2+) binding. Residues asparagine 363, asparagine 406, and asparagine 417 are each glycosylated (N-linked (GlcNAc...) asparagine). The segment at 383 to 465 (ILENSKLPEG…IILQFICECE (83 aa)) is interaction with TMEM182. 4 consecutive I-EGF domains span residues 466 to 501 (CQNE…RHCE), 502 to 554 (CSTD…KFCE), 555 to 591 (CDNF…SACD), and 592 to 631 (CSLD…PTCE). A glycan (N-linked (GlcNAc...) asparagine) is linked at asparagine 481. A glycan (N-linked (GlcNAc...) asparagine) is linked at asparagine 520. N-linked (GlcNAc...) asparagine glycosylation is present at asparagine 584. N-linked (GlcNAc...) asparagine glycosylation is present at asparagine 669. Residues 729-751 (IIPIVAGVVAGIVLIGLALLLIW) form a helical membrane-spanning segment. Residues 752–798 (KLLMIIHDTREFAKFEKEKMNAKWDTGENPIYKSAVTTVVNPKYEGK) lie on the Cytoplasmic side of the membrane. The segment at 762–767 (EFAKFE) is signal for sorting from recycling endosomes; interaction with ACAP1. Residue threonine 777 is modified to Phosphothreonine. The residue at position 783 (tyrosine 783) is a Phosphotyrosine. The residue at position 785 (serine 785) is a Phosphoserine. An interaction with ITGB1BP1 region spans residues 785–792 (SAVTTVVN). Threonine 789 carries the post-translational modification Phosphothreonine. Position 794 is an N6-acetyllysine; alternate (lysine 794). Residue lysine 794 forms a Glycyl lysine isopeptide (Lys-Gly) (interchain with G-Cter in SUMO1); alternate linkage.

It belongs to the integrin beta chain family. In terms of assembly, interacts with seprase FAP (seprase); the interaction occurs at the cell surface of invadopodia membrane in a collagen-dependent manner. Heterodimer of an alpha and a beta subunit. Beta-1 associates with either alpha-1, alpha-2, alpha-3, alpha-4, alpha-5, alpha-6, alpha-7, alpha-8, alpha-9, alpha-10, alpha-11 or alpha-V. ITGA6:ITGB1 is found in a complex with CD9; interaction takes place in oocytes and is involved in sperm-egg fusion. Binds LGALS3BP and NMRK2, when associated with alpha-7, but not with alpha-5. Interacts with FLNA, FLNB, FLNC and RANBP9. Interacts with KRT1 in the presence of RACK1 and SRC. Interacts with JAML; integrin alpha-4/beta-1 may regulate leukocyte to endothelial cells adhesion by controlling JAML homodimerization. Interacts with RAB21. Interacts (via the cytoplasmic region) with RAB25 (via the hypervariable C-terminal region). Interacts with MYO10. Interacts with ITGB1BP1 (via C-terminal region); the interaction is a prerequisite for focal adhesion disassembly. Interacts with TLN1; the interaction is prevented by competitive binding of ITGB1BP1. Interacts with ACAP1; required for ITGB1 recycling. Interacts with ASAP3. Interacts with FERMT2; the interaction is inhibited in presence of ITGB1BP1. Interacts with DAB2. Interacts with FGR and HCK. Interacts with alpha-7A and alpha-7B in adult skeletal muscle. Interacts with alpha-7B in cardiomyocytes of adult heart. Interacts with EMP2; the interaction may be direct or indirect and ITGB1 has a heterodimer form. ITGA5:ITGB1 interacts with CCN3. ITGA4:ITGB1 is found in a ternary complex with CX3CR1 and CX3CL1. ITGA5:ITGB1 interacts with FBN1. ITGA5:ITGB1 acts as a receptor for fibronectin FN1 and mediates R-G-D-dependent cell adhesion to FN1. ITGA5:ITGB1 interacts with IL1B. Interacts with MDK. ITGA4:ITGB1 interacts with MDK; this interaction mediates MDK-induced osteoblast cells migration through PXN phosphorylation. ITGA6:ITGB1 interacts with MDK; this interaction mediates MDK-induced neurite-outgrowth. ITGA5:ITGB1 interacts with ACE2. Interacts with TMEM182 and LAMB1. Interacts with tensin TNS3; TNS3 also interacts with PEAK1, thus acting as an adapter molecule to bridge the association of PEAK1 with ITGB1. Interacts with tensin TNS4; the interaction displaces tensin TNS3 from the ITGB1 cytoplasmic tail and promotes ITGB1 stability. Integrin ITGA9:ITGB1 interacts with SPP1/OPN (via N-terminus). Integrin ITGA9:ITGB1 interacts with TNC/TNFN3 (via the 3rd Fibronectin type-III domain). Integrins ITGA4:ITGB1 and ITGA9:ITGB1 interact with SVEP1 (via Sushi domain 21); thereby inhibit Ca(2+) intracellular signaling and as a result repress vasocontraction. ITGA4:ITGB1 and ITGA5:ITGB1 interacts with SELP. Interacts with CD248. ITGA5:ITGB1 interacts with IGFBP1. ITGA4:ITGB1 interacts with BCAM. Interacts with ADGRG6.

The protein localises to the cell membrane. It localises to the cell projection. The protein resides in the invadopodium membrane. Its subcellular location is the ruffle membrane. It is found in the recycling endosome. The protein localises to the melanosome. It localises to the lamellipodium. The protein resides in the ruffle. Its subcellular location is the cell junction. It is found in the focal adhesion. Functionally, integrins alpha-1/beta-1, alpha-2/beta-1, alpha-10/beta-1 and alpha-11/beta-1 are receptors for collagen. Integrins alpha-1/beta-1 and alpha-2/beta-2 recognize the proline-hydroxylated sequence G-F-P-G-E-R in collagen. Integrins alpha-2/beta-1, alpha-3/beta-1, alpha-4/beta-1, alpha-5/beta-1, alpha-8/beta-1, alpha-10/beta-1, alpha-11/beta-1 and alpha-V/beta-1 are receptors for fibronectin. Alpha-4/beta-1 recognizes one or more domains within the alternatively spliced CS-1 and CS-5 regions of fibronectin. Integrin alpha-5/beta-1 is a receptor for fibrinogen. Integrin alpha-1/beta-1, alpha-2/beta-1, alpha-6/beta-1 and alpha-7/beta-1 are receptors for lamimin. Integrin alpha-6/beta-1 (ITGA6:ITGB1) is present in oocytes and is involved in sperm-egg fusion. Integrin alpha-4/beta-1 is a receptor for VCAM1 and recognizes the sequence Q-I-D-S in VCAM1. Integrin alpha-9/beta-1 is a receptor for VCAM1, cytotactin and osteopontin. It recognizes the sequence A-E-I-D-G-I-E-L in cytotactin. Integrin alpha-3/beta-1 is a receptor for epiligrin, thrombospondin and CSPG4. Integrin alpha-3/beta-1 provides a docking site for FAP (seprase) at invadopodia plasma membranes in a collagen-dependent manner and hence may participate in the adhesion, formation of invadopodia and matrix degradation processes, promoting cell invasion. Alpha-3/beta-1 may mediate with LGALS3 the stimulation by CSPG4 of endothelial cells migration. Integrin alpha-V/beta-1 is a receptor for vitronectin. Beta-1 integrins recognize the sequence R-G-D in a wide array of ligands. When associated with alpha-7/beta-1 integrin, regulates cell adhesion and laminin matrix deposition. Involved in promoting endothelial cell motility and angiogenesis. Involved in osteoblast compaction through the fibronectin fibrillogenesis cell-mediated matrix assembly process and the formation of mineralized bone nodules. May be involved in up-regulation of the activity of kinases such as PKC via binding to KRT1. Together with KRT1 and RACK1, serves as a platform for SRC activation or inactivation. Plays a mechanistic adhesive role during telophase, required for the successful completion of cytokinesis. ITGA4:ITGB1 binds to fractalkine (CX3CL1) and may act as its coreceptor in CX3CR1-dependent fractalkine signaling. ITGA4:ITGB1 and ITGA5:ITGB1 bind to PLA2G2A via a site (site 2) which is distinct from the classical ligand-binding site (site 1) and this induces integrin conformational changes and enhanced ligand binding to site 1. ITGA5:ITGB1 acts as a receptor for fibrillin-1 (FBN1) and mediates R-G-D-dependent cell adhesion to FBN1. ITGA5:ITGB1 is a receptor for IL1B and binding is essential for IL1B signaling. ITGA5:ITGB3 is a receptor for soluble CD40LG and is required for CD40/CD40LG signaling. Plays an important role in myoblast differentiation and fusion during skeletal myogenesis. ITGA9:ITGB1 may play a crucial role in SVEP1/polydom-mediated myoblast cell adhesion. Integrins ITGA9:ITGB1 and ITGA4:ITGB1 repress PRKCA-mediated L-type voltage-gated channel Ca(2+) influx and ROCK-mediated calcium sensitivity in vascular smooth muscle cells via their interaction with SVEP1, thereby inhibit vasocontraction. The sequence is that of Integrin beta-1 (ITGB1) from Felis catus (Cat).